A 38-amino-acid polypeptide reads, in one-letter code: Defensin-like peptide 3 (38 aa).

2 disulfides stabilise this stretch: Cys6/Cys36 and Cys13/Cys29.

As to expression, produced by the crural gland and detected in venom from the spur located on each male hind leg.

It is found in the secreted. Functionally, does not show antimicrobial, myotoxic, hemolytic and cell-promoting activities. This is Defensin-like peptide 3 from Ornithorhynchus anatinus (Duckbill platypus).